A 346-amino-acid polypeptide reads, in one-letter code: [LysW]-lysine/[LysW]-ornithine hydrolase (346 aa).

A Zn(2+)-binding site is contributed by histidine 68. The active site involves aspartate 70. Aspartate 92 provides a ligand contact to Zn(2+). Catalysis depends on glutamate 122, which acts as the Proton acceptor. Positions 123, 146, and 317 each coordinate Zn(2+).

Belongs to the peptidase M20A family. LysK subfamily. Zn(2+) serves as cofactor. It depends on Co(2+) as a cofactor.

It localises to the cytoplasm. The enzyme catalyses [amino-group carrier protein]-C-terminal-gamma-(L-lysyl)-L-glutamate + H2O = [amino-group carrier protein]-C-terminal-L-glutamate + L-lysine. The catalysed reaction is [amino-group carrier protein]-C-terminal-gamma-(L-ornithyl)-L-glutamate + H2O = [amino-group carrier protein]-C-terminal-L-glutamate + L-ornithine. Its pathway is amino-acid biosynthesis; L-lysine biosynthesis via AAA pathway; L-lysine from L-alpha-aminoadipate (Thermus route): step 5/5. It functions in the pathway amino-acid biosynthesis; L-arginine biosynthesis. Functionally, catalyzes the release of L-lysine from [LysW]-gamma-L-lysine and the release of L-ornithine from [LysW]-L-ornithine. This chain is [LysW]-lysine/[LysW]-ornithine hydrolase, found in Saccharolobus islandicus (strain M.16.27) (Sulfolobus islandicus).